A 98-amino-acid chain; its full sequence is Large ribosomal subunit protein eL21 (98 aa).

Belongs to the eukaryotic ribosomal protein eL21 family.

In Methanocorpusculum labreanum (strain ATCC 43576 / DSM 4855 / Z), this protein is Large ribosomal subunit protein eL21.